Reading from the N-terminus, the 393-residue chain is Staphopain B (393 aa).

The signal sequence occupies residues 1–36; that stretch reads MNSSCKSRVFNIISIIMVSMLILSLGAFANNNKAKA. A propeptide spanning residues 37–219 is cleaved from the precursor; sequence DSHSKQLEIN…KVEENEAIQE (183 aa). Active-site residues include Cys243, His340, and Asn360.

This sequence belongs to the peptidase C47 family. In terms of assembly, in the cytoplasm, prematurely activated/folded SspB forms a stable non-covalent complex with SspC. Post-translationally, proteolytically cleaved by staphylococcal serine protease (SspA).

The protein resides in the secreted. Prematurely activated/folded staphopain B is inhibited by staphostatin B (SspC), which is probably required to protect staphylococcal cytoplasmic proteins from degradation by SspB. Also inactivated by E-64 and stimulated by EDTA. In terms of biological role, cysteine protease that plays an important role in the inhibition of host innate immune response. Degrades host elastin, fibrogen, fibronectin and kininogen. Blocks phagocytosis of opsonised S.aureus by neutrophils and monocytes by inducing their death in a proteolytic activity-dependent manner. Decreases surface expression of the 'don't eat me' signal CD31 on neutrophils. Cleaves host galectin-3/LGALS3, thereby inhibiting the neutrophil-activating ability of the lectin. In Staphylococcus aureus (strain NCTC 8325 / PS 47), this protein is Staphopain B (sspB).